Consider the following 60-residue polypeptide: Large ribosomal subunit protein uL30 (60 aa).

The protein belongs to the universal ribosomal protein uL30 family. Part of the 50S ribosomal subunit.

The polypeptide is Large ribosomal subunit protein uL30 (Bacillus mycoides (strain KBAB4) (Bacillus weihenstephanensis)).